A 151-amino-acid chain; its full sequence is Prolamin PPROL 14P (151 aa).

A signal peptide spans 1–19 (MKIIFVFALLAIAACSATA). Gln20 carries the pyrrolidone carboxylic acid modification.

This sequence belongs to the prolamin family.

It is found in the vacuole. The protein resides in the aleurone grain. Functionally, seed storage protein; serves as a source of nitrogen, carbon and sulfur for the young developing seedling. The protein is Prolamin PPROL 14P (PROLM20) of Oryza sativa subsp. japonica (Rice).